The sequence spans 258 residues: MPKFAANLTMMFNEVPFLDRFEAAAKAGFKYVEFLWPYDYPAQELKAILDKHGLKVVLFNTPAGDVNKGEWGGSAIPGREADSHRDIDLALEYALALGCPNVHIMSAVVPEGASREEYKQTFIKNVRYASDKYKPYGIKIQLEALSPEVKPNYLLKSQFDTLEVVELVDRDNVFVQLDYFHAQNVDGNLARLTDKLNGKFAHVQIASVPDRHEPDEGEINYQYIFDKLDEIGYTGYVGCEYKPRGETVTGLDWFQKYK.

Residue Glu-143 is the Proton donor/acceptor of the active site. The Mg(2+) site is built by Glu-143, Asp-178, Gln-204, and Glu-240. Catalysis depends on Glu-240, which acts as the Proton donor/acceptor.

Belongs to the hyi family. OtnI subfamily.

The enzyme catalyses 2-dehydro-L-erythronate = 3-dehydro-L-erythronate. The catalysed reaction is 2-dehydro-D-erythronate = 3-dehydro-D-erythronate. Functionally, catalyzes the isomerization of 2-oxo-tetronate to 3-oxo-tetronate. This chain is 2-oxo-tetronate isomerase, found in Haemophilus influenzae (strain ATCC 51907 / DSM 11121 / KW20 / Rd).